The chain runs to 246 residues: Flagellar L-ring protein (246 aa).

The signal sequence occupies residues 1 to 20 (MMQKCLSPKTLIAALVVLSA). The N-palmitoyl cysteine moiety is linked to residue Cys21. A lipid anchor (S-diacylglycerol cysteine) is attached at Cys21.

It belongs to the FlgH family. As to quaternary structure, the basal body constitutes a major portion of the flagellar organelle and consists of four rings (L,P,S, and M) mounted on a central rod.

Its subcellular location is the cell outer membrane. The protein resides in the bacterial flagellum basal body. In terms of biological role, assembles around the rod to form the L-ring and probably protects the motor/basal body from shearing forces during rotation. This Ruegeria pomeroyi (strain ATCC 700808 / DSM 15171 / DSS-3) (Silicibacter pomeroyi) protein is Flagellar L-ring protein.